Reading from the N-terminus, the 201-residue chain is Dephospho-CoA kinase (201 aa).

Residues 3 to 201 (WIGLTGGIAC…KWLEELKNQN (199 aa)) enclose the DPCK domain. 11 to 16 (ACGKST) lines the ATP pocket.

It belongs to the CoaE family.

It is found in the cytoplasm. The catalysed reaction is 3'-dephospho-CoA + ATP = ADP + CoA + H(+). It participates in cofactor biosynthesis; coenzyme A biosynthesis; CoA from (R)-pantothenate: step 5/5. Functionally, catalyzes the phosphorylation of the 3'-hydroxyl group of dephosphocoenzyme A to form coenzyme A. This is Dephospho-CoA kinase from Bdellovibrio bacteriovorus (strain ATCC 15356 / DSM 50701 / NCIMB 9529 / HD100).